Reading from the N-terminus, the 226-residue chain is ATP-dependent dethiobiotin synthetase BioD (226 aa).

Thr19 serves as a coordination point for Mg(2+). Lys40 is an active-site residue. Residues Asp53 and Glu114 each contribute to the Mg(2+) site. Residues Asp53, 114 to 117 (EGAG), and 174 to 175 (NR) each bind ATP.

This sequence belongs to the dethiobiotin synthetase family. As to quaternary structure, homodimer. Mg(2+) serves as cofactor.

It is found in the cytoplasm. It catalyses the reaction (7R,8S)-7,8-diammoniononanoate + CO2 + ATP = (4R,5S)-dethiobiotin + ADP + phosphate + 3 H(+). It participates in cofactor biosynthesis; biotin biosynthesis; biotin from 7,8-diaminononanoate: step 1/2. Catalyzes a mechanistically unusual reaction, the ATP-dependent insertion of CO2 between the N7 and N8 nitrogen atoms of 7,8-diaminopelargonic acid (DAPA, also called 7,8-diammoniononanoate) to form a ureido ring. The protein is ATP-dependent dethiobiotin synthetase BioD of Nitrosospira multiformis (strain ATCC 25196 / NCIMB 11849 / C 71).